Here is a 94-residue protein sequence, read N- to C-terminus: Small ribosomal subunit protein uS17 (94 aa).

The disordered stretch occupies residues 1–22 (MSEQTSAASTTDRGDRKTRRGY).

The protein belongs to the universal ribosomal protein uS17 family. Part of the 30S ribosomal subunit.

One of the primary rRNA binding proteins, it binds specifically to the 5'-end of 16S ribosomal RNA. This is Small ribosomal subunit protein uS17 from Kineococcus radiotolerans (strain ATCC BAA-149 / DSM 14245 / SRS30216).